We begin with the raw amino-acid sequence, 347 residues long: DnaJ homolog subfamily C member 22 (347 aa).

A TM2 domain is found at 4-50 (GLLMTYTLWAVGGPAGLHHLYLGRDSHALLWMLTLGGGGLGWLWEFW). Transmembrane regions (helical) follow at residues 5–25 (LLMT…HLYL), 32–52 (LLWM…FWML), 81–101 (FVAQ…SLSF), 105–125 (FYIV…AAVG), 135–155 (LGAA…ILPI), 186–206 (GLAY…HTAV), and 218–238 (FLSW…VLLL). In terms of domain architecture, J spans 277 to 347 (LALQVFGLSE…GSWRWEETSF (71 aa)).

The protein resides in the membrane. Functionally, may function as a co-chaperone. The protein is DnaJ homolog subfamily C member 22 (DNAJC22) of Bos taurus (Bovine).